The sequence spans 159 residues: Transcriptional repressor NrdR (159 aa).

A zinc finger spans residues 3 to 34 (CPFCRHDDTQVVDSRVSEDGAAIRRRRRCSAC). Positions 49 to 139 (PAVVKKDGSR…VYRRFEDVSE (91 aa)) constitute an ATP-cone domain.

This sequence belongs to the NrdR family. Zn(2+) is required as a cofactor.

In terms of biological role, negatively regulates transcription of bacterial ribonucleotide reductase nrd genes and operons by binding to NrdR-boxes. The polypeptide is Transcriptional repressor NrdR (Burkholderia cenocepacia (strain HI2424)).